A 494-amino-acid polypeptide reads, in one-letter code: Cytochrome P450 2G1 (494 aa).

Cys439 serves as a coordination point for heme.

It belongs to the cytochrome P450 family. It depends on heme as a cofactor. As to expression, olfactory epithelium.

The protein resides in the endoplasmic reticulum membrane. Its subcellular location is the microsome membrane. The catalysed reaction is an organic molecule + reduced [NADPH--hemoprotein reductase] + O2 = an alcohol + oxidized [NADPH--hemoprotein reductase] + H2O + H(+). Cytochromes P450 are a group of heme-thiolate monooxygenases. This isozyme seems to be implicated in olfaction. The sequence is that of Cytochrome P450 2G1 (CYP2G1) from Oryctolagus cuniculus (Rabbit).